Consider the following 74-residue polypeptide: Putative defensin-like protein 128 (74 aa).

Positions 1 to 24 are cleaved as a signal peptide; that stretch reads MSKLTNVVIFIVFFLGMMAKETQG. 4 cysteine pairs are disulfide-bonded: Cys28/Cys72, Cys37/Cys56, Cys42/Cys66, and Cys46/Cys68.

Belongs to the DEFL family.

Its subcellular location is the secreted. This is Putative defensin-like protein 128 (LCR8) from Arabidopsis thaliana (Mouse-ear cress).